Consider the following 206-residue polypeptide: ATP phosphoribosyltransferase (206 aa).

This sequence belongs to the ATP phosphoribosyltransferase family. Short subfamily. Heteromultimer composed of HisG and HisZ subunits.

It is found in the cytoplasm. It carries out the reaction 1-(5-phospho-beta-D-ribosyl)-ATP + diphosphate = 5-phospho-alpha-D-ribose 1-diphosphate + ATP. The protein operates within amino-acid biosynthesis; L-histidine biosynthesis; L-histidine from 5-phospho-alpha-D-ribose 1-diphosphate: step 1/9. In terms of biological role, catalyzes the condensation of ATP and 5-phosphoribose 1-diphosphate to form N'-(5'-phosphoribosyl)-ATP (PR-ATP). Has a crucial role in the pathway because the rate of histidine biosynthesis seems to be controlled primarily by regulation of HisG enzymatic activity. The polypeptide is ATP phosphoribosyltransferase (Leptospira interrogans serogroup Icterohaemorrhagiae serovar copenhageni (strain Fiocruz L1-130)).